A 597-amino-acid polypeptide reads, in one-letter code: Proline--tRNA ligase (597 aa).

The protein belongs to the class-II aminoacyl-tRNA synthetase family. ProS type 1 subfamily. Homodimer.

It localises to the cytoplasm. The catalysed reaction is tRNA(Pro) + L-proline + ATP = L-prolyl-tRNA(Pro) + AMP + diphosphate. Catalyzes the attachment of proline to tRNA(Pro) in a two-step reaction: proline is first activated by ATP to form Pro-AMP and then transferred to the acceptor end of tRNA(Pro). As ProRS can inadvertently accommodate and process non-cognate amino acids such as alanine and cysteine, to avoid such errors it has two additional distinct editing activities against alanine. One activity is designated as 'pretransfer' editing and involves the tRNA(Pro)-independent hydrolysis of activated Ala-AMP. The other activity is designated 'posttransfer' editing and involves deacylation of mischarged Ala-tRNA(Pro). The misacylated Cys-tRNA(Pro) is not edited by ProRS. The polypeptide is Proline--tRNA ligase (Bifidobacterium longum (strain NCC 2705)).